Consider the following 218-residue polypeptide: Uracil-DNA glycosylase (218 aa).

D60 (proton acceptor) is an active-site residue.

The protein belongs to the uracil-DNA glycosylase (UDG) superfamily. UNG family.

The protein localises to the cytoplasm. It catalyses the reaction Hydrolyzes single-stranded DNA or mismatched double-stranded DNA and polynucleotides, releasing free uracil.. Excises uracil residues from the DNA which can arise as a result of misincorporation of dUMP residues by DNA polymerase or due to deamination of cytosine. The sequence is that of Uracil-DNA glycosylase from Shewanella oneidensis (strain ATCC 700550 / JCM 31522 / CIP 106686 / LMG 19005 / NCIMB 14063 / MR-1).